The primary structure comprises 312 residues: Protoheme IX farnesyltransferase (312 aa).

Helical transmembrane passes span 34–54 (LVIFTALVGLMIAPGHVHPVL), 56–76 (FTAILCIAVGAGASGALNMAL), 119–139 (ALVNWYAGGLLAFTIFFYVVI), 152–172 (IVIGGAAGALPPVVAWAAATG), 179–199 (LLLFLIIFFWTPPHFWALALF), 225–245 (ILLYTIVLVAIAAAPWPLGYF), 247–267 (WVYGVTSLVLGAGMLVLAINV), and 283–303 (LFAFSILYLFALFAVLLLDVL).

Belongs to the UbiA prenyltransferase family. Protoheme IX farnesyltransferase subfamily.

It is found in the cell inner membrane. It carries out the reaction heme b + (2E,6E)-farnesyl diphosphate + H2O = Fe(II)-heme o + diphosphate. The protein operates within porphyrin-containing compound metabolism; heme O biosynthesis; heme O from protoheme: step 1/1. In terms of biological role, converts heme B (protoheme IX) to heme O by substitution of the vinyl group on carbon 2 of heme B porphyrin ring with a hydroxyethyl farnesyl side group. This Nitrobacter hamburgensis (strain DSM 10229 / NCIMB 13809 / X14) protein is Protoheme IX farnesyltransferase.